Consider the following 216-residue polypeptide: Somatotropin (216 aa).

A signal peptide spans 1 to 26 (MAAGPRTSVLLAFGLLCLPWPQDVGA). H45 lines the Zn(2+) pocket. Residues C78 and C189 are joined by a disulfide bond. A Phosphoserine modification is found at S131. E198 serves as a coordination point for Zn(2+). C206 and C214 are oxidised to a cystine.

This sequence belongs to the somatotropin/prolactin family.

Its subcellular location is the secreted. Plays an important role in growth control. Its major role in stimulating body growth is to stimulate the liver and other tissues to secrete IGF1. It stimulates both the differentiation and proliferation of myoblasts. It also stimulates amino acid uptake and protein synthesis in muscle and other tissues. This is Somatotropin (GH1) from Equus caballus (Horse).